Consider the following 393-residue polypeptide: Protein TsgA (393 aa).

Helical transmembrane passes span 11–31 (WISF…GMVM), 51–71 (FLNA…EIVP), 78–98 (FGFL…SLAL), 101–121 (AAMF…TFLI), 134–154 (LLFT…IAAF), 162–182 (WYWV…LTFG), 206–226 (IGVL…LGFI), 245–265 (TLVS…SFIL), 273–293 (ILTV…TGTP), 297–317 (AWSI…IITL), 332–352 (FVLT…GPIV), and 361–381 (LLTA…LGFV).

Belongs to the major facilitator superfamily. TsgA family.

The protein localises to the cell inner membrane. In Escherichia coli O7:K1 (strain IAI39 / ExPEC), this protein is Protein TsgA.